The chain runs to 256 residues: Ribosomal RNA small subunit methyltransferase J (256 aa).

Residues 101–102 (RD), 117–118 (ER), and aspartate 174 each bind S-adenosyl-L-methionine.

It belongs to the methyltransferase superfamily. RsmJ family.

Its subcellular location is the cytoplasm. It catalyses the reaction guanosine(1516) in 16S rRNA + S-adenosyl-L-methionine = N(2)-methylguanosine(1516) in 16S rRNA + S-adenosyl-L-homocysteine + H(+). Specifically methylates the guanosine in position 1516 of 16S rRNA. The sequence is that of Ribosomal RNA small subunit methyltransferase J from Chromohalobacter salexigens (strain ATCC BAA-138 / DSM 3043 / CIP 106854 / NCIMB 13768 / 1H11).